Reading from the N-terminus, the 172-residue chain is Ribosome maturation factor RimP (172 aa).

The protein belongs to the RimP family.

Its subcellular location is the cytoplasm. Its function is as follows. Required for maturation of 30S ribosomal subunits. This chain is Ribosome maturation factor RimP, found in Nitratidesulfovibrio vulgaris (strain ATCC 29579 / DSM 644 / CCUG 34227 / NCIMB 8303 / VKM B-1760 / Hildenborough) (Desulfovibrio vulgaris).